The primary structure comprises 397 residues: Lysophospholipid transporter LplT (397 aa).

At 1–17 (MSESVHTNTSLWSKGMK) the chain is on the periplasmic side. The chain crosses the membrane as a helical span at residues 18 to 38 (AVIVAQFLSAFGDNALLFATL). Over 39–52 (ALLKAQFYPEWSQP) the chain is Cytoplasmic. A helical membrane pass occupies residues 53 to 73 (ILQMVFVGAYILFAPFVGQVA). Topologically, residues 74-90 (DSFAKGRVMMFANGLKL) are periplasmic. A helical membrane pass occupies residues 91 to 111 (LGAASICFGINPFLGYTLVGV). Residues 112–144 (GAAAYSPAKYGILGELTTGSKLVKANGLMEAST) lie on the Cytoplasmic side of the membrane. The helical transmembrane segment at 145–165 (IAAILLGSVAGGVLADWHVLV) threads the bilayer. A topological domain (periplasmic) is located at residue A166. The chain crosses the membrane as a helical span at residues 167–187 (LAACALAYGGAVVANIYIPKL). Over 188–226 (AAARPGQSWNLINMTRSFLNACTSLWCNGETRFSLVGTS) the chain is Cytoplasmic. A helical transmembrane segment spans residues 227 to 247 (LFWGAGVTLRFLLVLWVPVAL). Over 248–256 (GITDNATPT) the chain is Periplasmic. Residues 257–277 (YLNAMVAIGIVVGAGAAAKLV) traverse the membrane as a helical segment. The Cytoplasmic portion of the chain corresponds to 278–280 (TLE). The chain crosses the membrane as a helical span at residues 281-301 (TVSRCMPAGILIGVVVLIFSL). Residues 302-304 (QHE) are Periplasmic-facing. Residues 305–325 (LLPAYALLMLIGVLGGFFVVP) form a helical membrane-spanning segment. At 326-343 (LNALLQERGKKSVGAGNA) the chain is on the cytoplasmic side. The chain crosses the membrane as a helical span at residues 344-364 (IAVQNLGENSAMLLMLGIYSL). Over 365 to 366 (AV) the chain is Periplasmic. Residues 367–387 (MVGIPVVPIGIGFGALFALAI) traverse the membrane as a helical segment. Residues 388-397 (TALWIWQRRH) are Cytoplasmic-facing.

It belongs to the major facilitator superfamily. LplT (TC 2.A.1.42) family.

The protein localises to the cell inner membrane. Catalyzes the facilitated diffusion of 2-acyl-glycero-3-phosphoethanolamine (2-acyl-GPE) into the cell. The protein is Lysophospholipid transporter LplT of Shigella dysenteriae serotype 1 (strain Sd197).